Consider the following 245-residue polypeptide: MGQKVNPIGLRLGINRTADSRWYADSADFGRLLHEDISIRKAIREKLKQAGISKIIIERPHKKCLITIHTARPGLVIGKKGGDIEVLRKELAKMTSDEVRVNLVEIRKPEIDATLIADDIARQLERRASFRRAMKRSIQSAMRLGAEGVKVVVSGRLGGAEIARTEKYAEGSVPLHTLRADIDYGTAEATTTYGIIGVKVWVYKGEILEHDPMAQDKRLETSGQSRARANTNQRGPASGAQAAGA.

The region spanning 39 to 107 is the KH type-2 domain; the sequence is IRKAIREKLK…EVRVNLVEIR (69 aa). Positions 216 to 245 are disordered; that stretch reads DKRLETSGQSRARANTNQRGPASGAQAAGA. The segment covering 221–235 has biased composition (polar residues); sequence TSGQSRARANTNQRG.

This sequence belongs to the universal ribosomal protein uS3 family. In terms of assembly, part of the 30S ribosomal subunit. Forms a tight complex with proteins S10 and S14.

Its function is as follows. Binds the lower part of the 30S subunit head. Binds mRNA in the 70S ribosome, positioning it for translation. The chain is Small ribosomal subunit protein uS3 from Hyphomonas neptunium (strain ATCC 15444).